A 356-amino-acid polypeptide reads, in one-letter code: Septin-2A (356 aa).

A Septin-type G domain is found at 33–305 (KGFEFTLMVV…ENFRSERLKK (273 aa)). Residues 43–50 (GESGLGKS) are G1 motif. GTP is bound by residues 43 to 50 (GESGLGKS), threonine 77, glycine 103, 182 to 190 (KADTLTLRE), glycine 240, and arginine 255. The interval 100 to 103 (DTPG) is G3 motif. The G4 motif stretch occupies residues 181–184 (AKAD). Positions 259-269 (WGVVEVENTEH) are important for dimerization.

Belongs to the TRAFAC class TrmE-Era-EngA-EngB-Septin-like GTPase superfamily. Septin GTPase family. In terms of assembly, septins polymerize into heterooligomeric protein complexes that form filaments, and associate with cellular membranes, actin filaments and microtubules. GTPase activity is required for filament formation. Can form heterooligomers with other family members and form filaments. Interacts with wdpcp.

It localises to the cytoplasm. The protein localises to the cytoskeleton. Its subcellular location is the spindle. It is found in the cleavage furrow. The protein resides in the midbody. It localises to the cell projection. The protein localises to the cilium membrane. In terms of biological role, filament-forming cytoskeletal GTPase. Required for normal organization of the actin cytoskeleton. Plays a role in the biogenesis of polarized columnar-shaped epithelium. Required for the progression through mitosis through regulation of chromosome congression. During anaphase, may be required for chromosome segregation and spindle elongation. Probably plays a role in ciliogenesis and collective cell movements including convergent extension during gastrulation. In cilia, required for the integrity of the diffusion barrier at the base of the primary cilium that prevents diffusion of transmembrane proteins between the cilia and plasma membranes. Controls cell shape and not polarization of cells during convergent extension. This chain is Septin-2A (sept2-a), found in Xenopus laevis (African clawed frog).